A 388-amino-acid chain; its full sequence is F-box protein ETP2 (388 aa).

The F-box domain occupies 2–48 (KTIQEQLPNDLVEEILCRVPATSLRRLRSTCKAWNRLFKGDRILASK).

Interacts with EIN2 (via C-terminus).

Its function is as follows. Negative regulator of EIN2 protein stability. The chain is F-box protein ETP2 from Arabidopsis thaliana (Mouse-ear cress).